The following is a 210-amino-acid chain: Probable GTP-binding protein EngB (210 aa).

Residues 27–201 (MGIEVAFAGR…HQKLDIWFSQ (175 aa)) form the EngB-type G domain. GTP contacts are provided by residues 35–42 (GRSNAGKS), 62–66 (GRTQL), 80–83 (DLPG), 147–150 (TKAD), and 180–182 (FSV). The Mg(2+) site is built by serine 42 and threonine 64.

The protein belongs to the TRAFAC class TrmE-Era-EngA-EngB-Septin-like GTPase superfamily. EngB GTPase family. It depends on Mg(2+) as a cofactor.

Functionally, necessary for normal cell division and for the maintenance of normal septation. This Photorhabdus laumondii subsp. laumondii (strain DSM 15139 / CIP 105565 / TT01) (Photorhabdus luminescens subsp. laumondii) protein is Probable GTP-binding protein EngB.